The primary structure comprises 350 residues: tRNA uridine(34) hydroxylase (350 aa).

The Rhodanese domain maps to 146–240 (DDPDALFIDM…YARKAREQGL (95 aa)). C200 acts as the Cysteine persulfide intermediate in catalysis.

The protein belongs to the TrhO family.

It catalyses the reaction uridine(34) in tRNA + AH2 + O2 = 5-hydroxyuridine(34) in tRNA + A + H2O. Functionally, catalyzes oxygen-dependent 5-hydroxyuridine (ho5U) modification at position 34 in tRNAs. The protein is tRNA uridine(34) hydroxylase of Escherichia fergusonii (strain ATCC 35469 / DSM 13698 / CCUG 18766 / IAM 14443 / JCM 21226 / LMG 7866 / NBRC 102419 / NCTC 12128 / CDC 0568-73).